The primary structure comprises 641 residues: ATP-dependent zinc metalloprotease FtsH (641 aa).

The Cytoplasmic segment spans residues 1–16 (MNKQQKPKRSPLRPDY). Residues 17 to 37 (LVIVIIILLAIGMYFFFTEMM) traverse the membrane as a helical segment. Residues 38–131 (APKVKQFDEF…VSFVPHVSVD (94 aa)) are Extracellular-facing. A helical transmembrane segment spans residues 132–152 (FWNIISTLLLIAAPIVLVVIM). At 153–641 (FRSMSSQSNK…EVEEDSKKSE (489 aa)) the chain is on the cytoplasmic side. Position 222–229 (222–229 (GQPGTGKT)) interacts with ATP. H444 contacts Zn(2+). The active site involves E445. H448 and D520 together coordinate Zn(2+).

It in the central section; belongs to the AAA ATPase family. The protein in the C-terminal section; belongs to the peptidase M41 family. As to quaternary structure, homohexamer. It depends on Zn(2+) as a cofactor.

The protein resides in the cell membrane. Acts as a processive, ATP-dependent zinc metallopeptidase for both cytoplasmic and membrane proteins. Plays a role in the quality control of integral membrane proteins. In Acholeplasma laidlawii (strain PG-8A), this protein is ATP-dependent zinc metalloprotease FtsH.